Consider the following 157-residue polypeptide: MKRLFMKASLVLFAVVFVFAVKGAPAKAETHAYDGKSPYYNDCASSGSTKKSSNLVNASNQVIGVVELKFSSTCKTAWAKITMNNTLTSGYEANAEITRNTDGKRYNCDSAGGNGKAVAGQKSCYTPMVYDLDPRTSYAFGKYSGPNLNVWATTGSY.

The signal sequence occupies residues 1-28 (MKRLFMKASLVLFAVVFVFAVKGAPAKA).

This is an uncharacterized protein from Bacillus subtilis (strain 168).